The sequence spans 191 residues: Small ribosomal subunit protein eS7 (191 aa).

N-acetylmethionine is present on Met1.

It belongs to the eukaryotic ribosomal protein eS7 family.

The sequence is that of Small ribosomal subunit protein eS7 (RPS7) from Brassica oleracea (Wild cabbage).